The sequence spans 780 residues: Cullin-5 (780 aa).

Residue Ser34 is modified to Phosphoserine. Phosphothreonine is present on Thr210. A Cullin neddylation domain is found at 713–772 (LRTRKLYIQIMKMRKKISNAQLQTELVEILKNMFLPQKKMIKEQIEWLIEHKYIRRDESD). Residue Lys724 forms a Glycyl lysine isopeptide (Lys-Gly) (interchain with G-Cter in NEDD8) linkage.

Belongs to the cullin family. Component of multiple cullin-5-RING E3 ubiquitin-protein ligase complexes (ECS complexes, also named CRL5 complexes) formed of CUL5, Elongin BC (ELOB and ELOC), RNF7/RBX2 and a variable SOCS box domain-containing protein as substrate-specific recognition component. CUL5-containing ECS complexes specifically contain RNF7/RBX2, and not RBX1, as catalytic subunit. Component of the ECS(ASB2) complex with the substrate recognition component ASB2. Component of the ECS(ASB6) complex with the substrate recognition component ASB6. Component of the ECS(ASB7) complex with the substrate recognition component ASB7. Component of the ECS(ASB9) complex with the substrate recognition component ASB9. Component of the ECS(ASB11) complex with the substrate recognition component ASB11. Component of the ECS(ASB12) complex with the substrate recognition component ASB12. Component of the ECS(LRRC41) complex with the substrate recognition component LRRC41. Component of the ECS(SOCS1) complex with the substrate recognition component SOCS1. Component of the ECS(SOCS2) complex with the substrate recognition component SOCS2. Component of the ECS(WSB1) complex with the substrate recognition subunit WSB1. Component of the ECS(SOCS3) complex with the substrate recognition component SOCS3. Component of the ECS(SOCS7) complex with the substrate recognition component SOCS7. Component of the ECS(SPSB1) complex with the substrate recognition component SPSB1. Component of the ECS(SPSB3) complex with the substrate recognition component SPSB3. Component of the ECS(SPSB2) complex with the substrate recognition component SPSB2. Component of the ECS(SPSB4) complex with the substrate recognition component SPSB4. Component of the ECS(RAB40) complex with the substrate recognition subunit RAB40A, RAB40B or RAB40C. Component of the ECS(KLHDC1) complex with the substrate recognition component KLHDC1. Component of the ECS(PCMTD1) complex with the substrate recognition subunit PCMTD1. May also form complexes containing RBX1 and ELOA or VHL; additional evidence is however required to confirm this result in vivo. Interacts (when neddylated) with ARIH2; leading to activate the E3 ligase activity of ARIH2. Interacts with ERCC6; the interaction is induced by DNA damaging agents or inhibitors of RNA polymerase II elongation. Interacts with ELOA (via the BC-box). Interacts (unneddylated form) with DCUN1D1, DCUN1D2, DCUN1D3, DCUN1D4 and DCUN1D5; these interactions promote the cullin neddylation. Post-translationally, neddylated; which enhances the ubiquitination activity of ECS complexes and prevents binding of the inhibitor CAND1. Deneddylated via its interaction with the COP9 signalosome (CSN). In terms of tissue distribution, kidney collecting tubules.

Its subcellular location is the nucleus. The protein operates within protein modification; protein ubiquitination. Its function is as follows. Core component of multiple cullin-5-RING E3 ubiquitin-protein ligase complexes (ECS complexes, also named CRL5 complexes), which mediate the ubiquitination and subsequent proteasomal degradation of target proteins. Acts a scaffold protein that contributes to catalysis through positioning of the substrate and the ubiquitin-conjugating enzyme. The functional specificity of the E3 ubiquitin-protein ligase complex depends on the variable SOCS box-containing substrate recognition component. Acts as a key regulator of neuron positioning during cortex development: component of various SOCS-containing ECS complexes, such as the ECS(SOCS7) complex, that regulate reelin signaling by mediating ubiquitination and degradation of DAB1. ECS(SOCS1) seems to direct ubiquitination of JAK2. The ECS(SOCS2) complex mediates the ubiquitination and subsequent proteasomal degradation of phosphorylated EPOR and GHR. The ECS(SPSB3) complex catalyzes ubiquitination of nuclear CGAS. ECS(KLHDC1) complex is part of the DesCEND (destruction via C-end degrons) pathway and mediates ubiquitination and degradation of truncated SELENOS selenoprotein produced by failed UGA/Sec decoding, which ends with a glycine. The ECS(ASB9) complex mediates ubiquitination and degradation of CKB. As part of some ECS complex, promotes 'Lys-11'-linked ubiquitination and degradation of BTRC. As part of a multisubunit ECS complex, polyubiquitinates monoubiquitinated POLR2A. As part of the ECS(RAB40C) complex, mediates ANKRD28 ubiquitination and degradation, thereby regulating protein phosphatase 6 (PP6) complex activity and focal adhesion assembly during cell migration. As part of the ECS(RAB40A) complex, mediates RHOU 'Lys-48'-linked ubiquitination and degradation, thus inhibiting focal adhesion disassembly during cell migration. As part of the ECS(RAB40B) complex, mediates LIMA1/EPLIN and RAP2 ubiquitination, thereby regulating actin cytoskeleton dynamics and stress fiber formation during cell migration. May form a cell surface vasopressin receptor. This Oryctolagus cuniculus (Rabbit) protein is Cullin-5 (CUL5).